Consider the following 367-residue polypeptide: DNA replication and repair protein RecF (367 aa).

Position 30–37 (30–37 (GNNAQGKT)) interacts with ATP.

The protein belongs to the RecF family.

The protein localises to the cytoplasm. Functionally, the RecF protein is involved in DNA metabolism; it is required for DNA replication and normal SOS inducibility. RecF binds preferentially to single-stranded, linear DNA. It also seems to bind ATP. The protein is DNA replication and repair protein RecF of Clostridium tetani (strain Massachusetts / E88).